Reading from the N-terminus, the 211-residue chain is ATP-dependent Clp protease proteolytic subunit 2 (211 aa).

Residue Ser106 is the Nucleophile of the active site. His131 is a catalytic residue.

This sequence belongs to the peptidase S14 family. As to quaternary structure, fourteen ClpP subunits assemble into 2 heptameric rings which stack back to back to give a disk-like structure with a central cavity, resembling the structure of eukaryotic proteasomes.

The protein resides in the cytoplasm. It carries out the reaction Hydrolysis of proteins to small peptides in the presence of ATP and magnesium. alpha-casein is the usual test substrate. In the absence of ATP, only oligopeptides shorter than five residues are hydrolyzed (such as succinyl-Leu-Tyr-|-NHMec, and Leu-Tyr-Leu-|-Tyr-Trp, in which cleavage of the -Tyr-|-Leu- and -Tyr-|-Trp bonds also occurs).. In terms of biological role, cleaves peptides in various proteins in a process that requires ATP hydrolysis. Has a chymotrypsin-like activity. Plays a major role in the degradation of misfolded proteins. This chain is ATP-dependent Clp protease proteolytic subunit 2, found in Bradyrhizobium diazoefficiens (strain JCM 10833 / BCRC 13528 / IAM 13628 / NBRC 14792 / USDA 110).